Here is a 60-residue protein sequence, read N- to C-terminus: Sperm protamine P1 (60 aa).

The segment at M1 to Y60 is disordered.

This sequence belongs to the protamine P1 family. As to expression, testis.

The protein localises to the nucleus. It localises to the chromosome. Its function is as follows. Protamines substitute for histones in the chromatin of sperm during the haploid phase of spermatogenesis. They compact sperm DNA into a highly condensed, stable and inactive complex. This Petrogale concinna (Nabarlek) protein is Sperm protamine P1 (PRM1).